The sequence spans 489 residues: MFS-type transporter MFS19 (489 aa).

The segment covering 1–12 (MAHSTAGDRDPE) has biased composition (basic and acidic residues). The segment at 1-42 (MAHSTAGDRDPEVGSEQHSSIAQLHTESMSDPWGDSNSPENP) is disordered. The span at 16 to 41 (EQHSSIAQLHTESMSDPWGDSNSPEN) shows a compositional bias: polar residues. The helical transmembrane segment at 52-72 (FHVAIVSIFTLTANLAATMFA) threads the bilayer. 2 N-linked (GlcNAc...) asparagine glycosylation sites follow: N83 and N86. Helical transmembrane passes span 91 to 111 (AMTVSLYVLGFAFGPLLLAPL), 127 to 147 (VYIAFTVGCAFSTNVSMFLVF), 149 to 169 (FLCGCAASGPMSIGGGTVADI), 180 to 200 (ALFAMGPLLGPVLGPIIGGYV), 208 to 228 (WTFRIILIMSGIIGLATMFFM), 282 to 302 (PIVLLISLYTGVLFGLIFLLF), 321 to 341 (GLAYLGLGIGMFLGLVVFSIL), 361 to 381 (LILMKWFGPITPLGCFMYGWS), 388 to 408 (WIVPILGTSIIGFGSLFVVIP), 425 to 445 (ALAANLLVRSPFGAFLGLVAA), and 454 to 474 (GWGNSVLGFITLAFTPVPWLF).

It belongs to the major facilitator superfamily.

The protein localises to the cell membrane. In terms of biological role, MFS-type efflux pump involved in the modulation susceptibility to various compounds including cumyl hydroperoxide, potassium superoxide, many singlet oxygen-generating compounds (eosin Y, rose Bengal, hematoporphyrin, methylene blue, and cercosporin), and the cell wall biosynthesis inhibitor Congo red. Involved in oxidative stress tolerance, colonization, and lesion formation. This chain is MFS-type transporter MFS19, found in Alternaria alternata (Alternaria rot fungus).